Here is a 120-residue protein sequence, read N- to C-terminus: NAD(P)H-quinone oxidoreductase subunit 3, chloroplastic (120 aa).

3 helical membrane-spanning segments follow: residues 9–29 (IFWT…WISG), 64–84 (MFAL…PWAM), and 88–108 (VLGV…VVGL).

It belongs to the complex I subunit 3 family. In terms of assembly, NDH is composed of at least 16 different subunits, 5 of which are encoded in the nucleus.

The protein localises to the plastid. It localises to the chloroplast thylakoid membrane. The enzyme catalyses a plastoquinone + NADH + (n+1) H(+)(in) = a plastoquinol + NAD(+) + n H(+)(out). It carries out the reaction a plastoquinone + NADPH + (n+1) H(+)(in) = a plastoquinol + NADP(+) + n H(+)(out). NDH shuttles electrons from NAD(P)H:plastoquinone, via FMN and iron-sulfur (Fe-S) centers, to quinones in the photosynthetic chain and possibly in a chloroplast respiratory chain. The immediate electron acceptor for the enzyme in this species is believed to be plastoquinone. Couples the redox reaction to proton translocation, and thus conserves the redox energy in a proton gradient. This chain is NAD(P)H-quinone oxidoreductase subunit 3, chloroplastic, found in Agrostis stolonifera (Creeping bentgrass).